Reading from the N-terminus, the 286-residue chain is DegV domain-containing protein SPs1668 (286 aa).

In terms of domain architecture, DegV spans 3–282; it reads FTIMTDSTAD…PNTLAVFVIG (280 aa). 2 residues coordinate hexadecanoate: Thr-62 and Ser-94.

Its function is as follows. May bind long-chain fatty acids, such as palmitate, and may play a role in lipid transport or fatty acid metabolism. This chain is DegV domain-containing protein SPs1668, found in Streptococcus pyogenes serotype M3 (strain SSI-1).